The sequence spans 271 residues: Formamidopyrimidine-DNA glycosylase (271 aa).

The active-site Schiff-base intermediate with DNA is proline 2. The Proton donor role is filled by glutamate 3. The Proton donor; for beta-elimination activity role is filled by lysine 58. Positions 92, 111, and 152 each coordinate DNA. Residues 237-271 (YVYGKVQKPCKICNNIITLIRQNGRSTYFCNACQN) form an FPG-type zinc finger. Arginine 261 acts as the Proton donor; for delta-elimination activity in catalysis.

It belongs to the FPG family. Monomer. The cofactor is Zn(2+).

The enzyme catalyses Hydrolysis of DNA containing ring-opened 7-methylguanine residues, releasing 2,6-diamino-4-hydroxy-5-(N-methyl)formamidopyrimidine.. It catalyses the reaction 2'-deoxyribonucleotide-(2'-deoxyribose 5'-phosphate)-2'-deoxyribonucleotide-DNA = a 3'-end 2'-deoxyribonucleotide-(2,3-dehydro-2,3-deoxyribose 5'-phosphate)-DNA + a 5'-end 5'-phospho-2'-deoxyribonucleoside-DNA + H(+). Functionally, involved in base excision repair of DNA damaged by oxidation or by mutagenic agents. Acts as a DNA glycosylase that recognizes and removes damaged bases. Has a preference for oxidized purines, such as 7,8-dihydro-8-oxoguanine (8-oxoG). Has AP (apurinic/apyrimidinic) lyase activity and introduces nicks in the DNA strand. Cleaves the DNA backbone by beta-delta elimination to generate a single-strand break at the site of the removed base with both 3'- and 5'-phosphates. In Wolbachia pipientis wMel, this protein is Formamidopyrimidine-DNA glycosylase.